We begin with the raw amino-acid sequence, 132 residues long: Agouti-signaling protein (132 aa).

Positions 1–22 are cleaved as a signal peptide; the sequence is MDVTRLLLATLLVFLCFFTVYS. Asn39 is a glycosylation site (N-linked (GlcNAc...) asparagine). Residues 62–88 are disordered; sequence ISRKEAEKKRSSKKEASMKKVAQPRTP. The segment covering 63-79 has biased composition (basic and acidic residues); the sequence is SRKEAEKKRSSKKEASM. Disulfide bonds link Cys93-Cys108, Cys100-Cys114, Cys107-Cys125, Cys111-Cys132, and Cys116-Cys123. The Agouti domain occupies 93-132; that stretch reads CVATRYSCKPPAPACCDPCASCQCRFFRSACSCRVLRLNC.

It localises to the secreted. Its function is as follows. Involved in the regulation of melanogenesis. The binding of ASP to MC1R precludes alpha-MSH initiated signaling and thus blocks production of cAMP, leading to a down-regulation of eumelanogenesis (brown/black pigment) and thus increasing synthesis of pheomelanin (yellow/red pigment). The polypeptide is Agouti-signaling protein (ASIP) (Semnopithecus entellus (Northern plains gray langur)).